The sequence spans 180 residues: tRNA (cytidine(56)-2'-O)-methyltransferase (180 aa).

S-adenosyl-L-methionine-binding positions include L84 and 112–116 (GAEKV).

This sequence belongs to the aTrm56 family. Homodimer.

The protein resides in the cytoplasm. The catalysed reaction is cytidine(56) in tRNA + S-adenosyl-L-methionine = 2'-O-methylcytidine(56) in tRNA + S-adenosyl-L-homocysteine + H(+). Specifically catalyzes the AdoMet-dependent 2'-O-ribose methylation of cytidine at position 56 in tRNAs. The polypeptide is tRNA (cytidine(56)-2'-O)-methyltransferase (Natronomonas pharaonis (strain ATCC 35678 / DSM 2160 / CIP 103997 / JCM 8858 / NBRC 14720 / NCIMB 2260 / Gabara) (Halobacterium pharaonis)).